Here is a 212-residue protein sequence, read N- to C-terminus: Glycerol-3-phosphate acyltransferase (212 aa).

A run of 5 helical transmembrane segments spans residues 3–23 (ILLA…VIVS), 51–71 (KAAI…VWLA), 78–98 (DVAV…PVFF), 115–135 (AVHP…AFFF), and 139–159 (SLAA…LFGT).

This sequence belongs to the PlsY family. As to quaternary structure, probably interacts with PlsX.

It localises to the cell inner membrane. The enzyme catalyses an acyl phosphate + sn-glycerol 3-phosphate = a 1-acyl-sn-glycero-3-phosphate + phosphate. It functions in the pathway lipid metabolism; phospholipid metabolism. In terms of biological role, catalyzes the transfer of an acyl group from acyl-phosphate (acyl-PO(4)) to glycerol-3-phosphate (G3P) to form lysophosphatidic acid (LPA). This enzyme utilizes acyl-phosphate as fatty acyl donor, but not acyl-CoA or acyl-ACP. The polypeptide is Glycerol-3-phosphate acyltransferase (Burkholderia vietnamiensis (strain G4 / LMG 22486) (Burkholderia cepacia (strain R1808))).